We begin with the raw amino-acid sequence, 598 residues long: Jacalin-related lectin 17 (598 aa).

Residues Met1–Ser23 are disordered. 4 consecutive Jacalin-type lectin domains span residues Ala2–Trp148, Pro151–Thr293, Pro295–Pro445, and Gly452–Pro595.

This sequence belongs to the jacalin lectin family.

This Arabidopsis thaliana (Mouse-ear cress) protein is Jacalin-related lectin 17 (JAL17).